We begin with the raw amino-acid sequence, 182 residues long: Translation initiation factor IF-3 (182 aa).

The segment at 1-22 (MPLGDCNISTPDNKQNRKNQEI) is disordered.

The protein belongs to the IF-3 family. As to quaternary structure, monomer.

The protein resides in the cytoplasm. IF-3 binds to the 30S ribosomal subunit and shifts the equilibrium between 70S ribosomes and their 50S and 30S subunits in favor of the free subunits, thus enhancing the availability of 30S subunits on which protein synthesis initiation begins. This is Translation initiation factor IF-3 from Xanthomonas axonopodis pv. citri (strain 306).